A 71-amino-acid chain; its full sequence is BBSome-interacting protein 1 (71 aa).

This sequence belongs to the BBIP10 family.

The protein localises to the cell projection. It localises to the cilium. It is found in the cytoplasm. Functionally, required for primary cilia assembly. In Nematostella vectensis (Starlet sea anemone), this protein is BBSome-interacting protein 1 (bbip1).